Here is a 235-residue protein sequence, read N- to C-terminus: Uridylate kinase (235 aa).

10-11 (GS) contacts ATP. Glycine 45 is a binding site for UMP. Positions 46 and 50 each coordinate ATP. Residues aspartate 67 and 115–121 (VTPGQTT) each bind UMP. ATP is bound by residues threonine 141, tyrosine 147, and aspartate 150.

The protein belongs to the UMP kinase family. In terms of assembly, homohexamer.

It is found in the cytoplasm. The enzyme catalyses UMP + ATP = UDP + ADP. Its pathway is pyrimidine metabolism; CTP biosynthesis via de novo pathway; UDP from UMP (UMPK route): step 1/1. Its activity is regulated as follows. Inhibited by UTP. In terms of biological role, catalyzes the reversible phosphorylation of UMP to UDP. This is Uridylate kinase from Methanocorpusculum labreanum (strain ATCC 43576 / DSM 4855 / Z).